The following is a 315-amino-acid chain: Probable cell division protein WhiA (315 aa).

Residues 278 to 312 (SLSDLAGMIEGQELTKSGINHRMRKLMQIVKELNH) constitute a DNA-binding region (H-T-H motif).

Belongs to the WhiA family.

Its function is as follows. Involved in cell division and chromosome segregation. The protein is Probable cell division protein WhiA of Oenococcus oeni (strain ATCC BAA-331 / PSU-1).